Reading from the N-terminus, the 107-residue chain is Ferredoxin 1 (107 aa).

4Fe-4S ferredoxin-type domains follow at residues 2–30 (TFVVTDNCIKCKYTDCVEVCPVDCFYEGP) and 31–60 (NFLVIHPDECIDCALCEPECPAQAIFSEDE). [3Fe-4S] cluster-binding residues include C9 and C17. [4Fe-4S] cluster-binding residues include C21, C40, C43, and C46. Position 50 (C50) interacts with [3Fe-4S] cluster.

Requires [4Fe-4S] cluster as cofactor. It depends on [3Fe-4S] cluster as a cofactor.

Its function is as follows. Ferredoxins are iron-sulfur proteins that transfer electrons in a wide variety of metabolic reactions. The chain is Ferredoxin 1 from Stutzerimonas stutzeri (Pseudomonas stutzeri).